A 195-amino-acid chain; its full sequence is Small ribosomal subunit protein uS7 (195 aa).

Belongs to the universal ribosomal protein uS7 family. As to quaternary structure, part of the 30S ribosomal subunit.

One of the primary rRNA binding proteins, it binds directly to 16S rRNA where it nucleates assembly of the head domain of the 30S subunit. Is located at the subunit interface close to the decoding center. This is Small ribosomal subunit protein uS7 from Sulfolobus acidocaldarius (strain ATCC 33909 / DSM 639 / JCM 8929 / NBRC 15157 / NCIMB 11770).